A 101-amino-acid chain; its full sequence is MAKKSKVARNAQRKALVAKYAKRRAALKARIRDRTLSYEERRAAQDALASLPRDSNPNRVTNRCALTGRPRGNLRRFGLSRIAFREKALRGEIPGVIKSSW.

A disordered region spans residues 47 to 66 (ALASLPRDSNPNRVTNRCAL).

It belongs to the universal ribosomal protein uS14 family. As to quaternary structure, part of the 30S ribosomal subunit. Contacts proteins S3 and S10.

Functionally, binds 16S rRNA, required for the assembly of 30S particles and may also be responsible for determining the conformation of the 16S rRNA at the A site. This chain is Small ribosomal subunit protein uS14A, found in Myxococcus xanthus (strain DK1622).